Here is a 546-residue protein sequence, read N- to C-terminus: Interleukin-20 receptor subunit alpha (546 aa).

Residues 1 to 32 (MHTPGTPAPGHPDPPPLLLLTLLLLLAASGRA) form the signal peptide. At 33-253 (VPCVFCGLPK…EVQTSAWKAK (221 aa)) the chain is on the extracellular side. 2 consecutive Fibronectin type-III domains span residues 42–138 (KPTN…FLET) and 139–245 (QVSP…TLEV). Residues Asn-45, Asn-86, Asn-94, Asn-185, and Asn-203 are each glycosylated (N-linked (GlcNAc...) asparagine). An intrachain disulfide couples Cys-90 to Cys-98. The cysteines at positions 218 and 239 are disulfide-linked. A helical transmembrane segment spans residues 254 to 274 (VIFWYVFLTSVIVFLFSAIGY). The Cytoplasmic portion of the chain corresponds to 275 to 546 (LVYRYIHVGK…EWGLHVQMES (272 aa)).

Belongs to the type II cytokine receptor family. As to quaternary structure, heterodimer with IL20RB and heterodimer with IL10RB.

It is found in the membrane. Functionally, the IL20RA/IL20RB dimer is a receptor for IL19, IL20 and IL24. The IL20RA/IL10RB dimer is a receptor for IL26. This Mus musculus (Mouse) protein is Interleukin-20 receptor subunit alpha (Il20ra).